The chain runs to 418 residues: Tyrosine--tRNA ligase (418 aa).

Tyrosine 34 serves as a coordination point for L-tyrosine. Positions 39-48 (PTADSLHLGH) match the 'HIGH' region motif. L-tyrosine is bound by residues tyrosine 169 and glutamine 173. Positions 229-233 (KFGKS) match the 'KMSKS' region motif. Lysine 232 is a binding site for ATP. One can recognise an S4 RNA-binding domain in the interval 352-418 (NNIVELLVSS…GKKKYFVLTY (67 aa)).

This sequence belongs to the class-I aminoacyl-tRNA synthetase family. TyrS type 1 subfamily. As to quaternary structure, homodimer.

Its subcellular location is the cytoplasm. It carries out the reaction tRNA(Tyr) + L-tyrosine + ATP = L-tyrosyl-tRNA(Tyr) + AMP + diphosphate + H(+). In terms of biological role, catalyzes the attachment of tyrosine to tRNA(Tyr) in a two-step reaction: tyrosine is first activated by ATP to form Tyr-AMP and then transferred to the acceptor end of tRNA(Tyr). This chain is Tyrosine--tRNA ligase, found in Streptococcus pneumoniae (strain Taiwan19F-14).